The primary structure comprises 253 residues: Chloride intracellular channel protein 4 (253 aa).

An N-acetylalanine modification is found at Ala2. Positions 2–101 (ALSMPLNGLK…EEFLEEVLCP (100 aa)) are required for insertion into the membrane. Residue Ser4 is modified to Phosphoserine. Lys24 is modified (N6-acetyllysine). The short motif at 35-38 (CPFS) is the G-site element. A helical membrane pass occupies residues 37–57 (FSQRLFMILWLKGVVFSVTTV). A GST C-terminal domain is found at 81-244 (NSEVKTDVNK…PSDKEVEIAY (164 aa)). Lys130 carries the N6-acetyllysine modification. A phosphoserine mark is found at Ser132, Ser167, and Ser236. A Phosphotyrosine modification is found at Tyr244.

This sequence belongs to the chloride channel CLIC family. Monomer. Interacts with HRH30. Interacts with AKAP9. In terms of tissue distribution, detected in blood vessels in the retina (at protein level). Expressed to the greatest extent in vivo in heart, lung, liver, kidney, and skin.

It localises to the cytoplasm. It is found in the cytoskeleton. Its subcellular location is the microtubule organizing center. The protein resides in the centrosome. The protein localises to the cytoplasmic vesicle membrane. It localises to the nucleus. It is found in the cell membrane. Its subcellular location is the mitochondrion. The protein resides in the cell junction. It catalyses the reaction chloride(in) = chloride(out). The enzyme catalyses thiocyanate(in) = thiocyanate(out). The catalysed reaction is nitrate(in) = nitrate(out). It carries out the reaction iodide(out) = iodide(in). It catalyses the reaction bromide(in) = bromide(out). The enzyme catalyses fluoride(in) = fluoride(out). The catalysed reaction is choline(out) = choline(in). In the soluble state, catalyzes glutaredoxin-like thiol disulfide exchange reactions with reduced glutathione as electron donor. Can insert into membranes and form voltage-dependent multi-ion conductive channels. Membrane insertion seems to be redox-regulated and may occur only under oxidizing conditions. Has alternate cellular functions like a potential role in angiogenesis or in maintaining apical-basolateral membrane polarity during mitosis and cytokinesis. Could also promote endothelial cell proliferation and regulate endothelial morphogenesis (tubulogenesis). Promotes cell-surface expression of HRH3. In Mus musculus (Mouse), this protein is Chloride intracellular channel protein 4 (Clic4).